Consider the following 471-residue polypeptide: MEQQSNLEKDLSVSSFLDEKEKSGYKQSVRLVSNDPSASPAATHKPPFISAALMLLNNTILCISFTIVVPTSERFVQHLGGGNGLSGVIIGLPTITALVLLYPMLRFSTPKAAKGYTIYRRPYTMSCISCIIGHIMYALADKAKSVALILVSRIFTGVACTMFLYHKRYFTDKALISIKYRTSMGVVNSVMATLGLTAGPFIGGLMAKSSMKSQSDIWNEYTSGNWLMAFIWVGLFLFGFACFREVLSPQTDVKEEVVEEKHVINDVKQDTNSKLGFVGCLVIFVVAFSGFSAYFLLNAYQASVPIYTSMLYNYSSFQAGNFLSLAGIINVPLLLIFSYLTRYLTDRDIILLGCCLNIVCMVIHITIHYTGKEFVQPYFIIYTLVFFGSSIANSPSVSLLTKVLHPKYHLIGNVAVQISISLSDTVGAIFGGAFRSFSPVVFFAVCLILNVMSVLALLIIWKKLKVKLRLA.

The next 12 helical transmembrane spans lie at 48–68 (FISAALMLLNNTILCISFTIV), 85–105 (LSGVIIGLPTITALVLLYPML), 123–140 (YTMSCISCIIGHIMYALA), 145–165 (SVALILVSRIFTGVACTMFLY), 186–206 (VVNSVMATLGLTAGPFIGGLM), 223–243 (SGNWLMAFIWVGLFLFGFACF), 277–297 (FVGCLVIFVVAFSGFSAYFLL), 320–340 (GNFLSLAGIINVPLLLIFSYL), 349–369 (IILLGCCLNIVCMVIHITIHY), 379–399 (FIIYTLVFFGSSIANSPSVSL), 414–434 (VAVQISISLSDTVGAIFGGAF), and 440–460 (VVFFAVCLILNVMSVLALLII).

The protein belongs to the major facilitator superfamily.

It localises to the golgi apparatus. The protein resides in the membrane. This is an uncharacterized protein from Schizosaccharomyces pombe (strain 972 / ATCC 24843) (Fission yeast).